The following is a 396-amino-acid chain: Proton-coupled antiporter flippase LtaA (396 aa).

12 helical membrane-spanning segments follow: residues phenylalanine 15 to leucine 34, isoleucine 46 to leucine 73, isoleucine 80 to phenylalanine 99, valine 105 to serine 126, glycine 138 to isoleucine 159, arginine 165 to valine 184, leucine 211 to leucine 231, threonine 243 to leucine 264, methionine 276 to valine 298, tryptophan 304 to alanine 326, tryptophan 338 to leucine 358, and phenylalanine 370 to alanine 390.

Belongs to the major facilitator superfamily. LtaA family.

It localises to the cell membrane. It participates in cell wall biogenesis; lipoteichoic acid biosynthesis. Functionally, proton-coupled antiporter flippase that catalyzes the translocation, from the inner to the outer leaflet of the cell membrane, of the lipid-linked disaccharide (anchor-LLD) that anchors lipoteichoic acids (LTA) to the cell membrane. The polypeptide is Proton-coupled antiporter flippase LtaA (ltaA) (Staphylococcus aureus (strain MRSA252)).